A 574-amino-acid polypeptide reads, in one-letter code: Glutamate--tRNA ligase (574 aa).

A 'HIGH' region motif is present at residues 109 to 119 (PNPDFVIHMGN).

Belongs to the class-I aminoacyl-tRNA synthetase family. Glutamate--tRNA ligase type 2 subfamily.

The protein resides in the cytoplasm. The enzyme catalyses tRNA(Glu) + L-glutamate + ATP = L-glutamyl-tRNA(Glu) + AMP + diphosphate. In terms of biological role, catalyzes the attachment of glutamate to tRNA(Glu) in a two-step reaction: glutamate is first activated by ATP to form Glu-AMP and then transferred to the acceptor end of tRNA(Glu). This is Glutamate--tRNA ligase from Aeropyrum pernix (strain ATCC 700893 / DSM 11879 / JCM 9820 / NBRC 100138 / K1).